The chain runs to 332 residues: Opticin (332 aa).

The N-terminal stretch at 1 to 19 (MRLLAFLSLLALVLQETGT) is a signal peptide. Positions 21–41 (SLPRKERKRREEQMPREGDSF) are disordered. Basic and acidic residues predominate over residues 29-39 (RREEQMPREGD). Sulfotyrosine is present on residues Y65 and Y71. Residues 86–106 (ATSISPAKSTTAPGTPSSNPT) are disordered. The region spanning 116 to 153 (LLSSQPNHGLPTCLVCVCLGSSVYCDDIDLEDIPPLPR) is the LRRNT domain. The residue at position 139 (Y139) is a Sulfotyrosine. LRR repeat units lie at residues 154–175 (RTAY…DFKG), 178–199 (KLKR…AFRL), 202–223 (ALQD…PSGI), 248–269 (KLQF…LPLS), 270–290 (LRSV…VFCD), and 300–320 (QLED…PSAY). C289 and C322 form a disulfide bridge. N312 carries an N-linked (GlcNAc...) asparagine glycan.

Belongs to the small leucine-rich proteoglycan (SLRP) family. SLRP class III subfamily. Homodimer. Post-translationally, O-glycosylated. Proteolytically cleaved by MMP1, MMP2, MMP3, MMP7, MMP8, MMP9, ADAMTS4, and ADAMTS5. Proteolytically cleaved by MMP13. The degradation of OPTC by proteases may contribute to osteoarthritis pathophysiology. In terms of processing, sulfated on tyrosine residues. As to expression, expressed in cartilage and synovial membranes (at protein level). Expressed in the retina, iris, ligament, skin and fetal liver (at protein level). Expressed in the retinal pigment epithelium (at protein level). Expressed in synovial fibroblasts and subchondral bone osteoblasts.

The protein resides in the secreted. The protein localises to the extracellular space. Its subcellular location is the extracellular matrix. In terms of biological role, inhibits angiogenesis in the vitreous humor of the eye, and therefore represses neovascularization. Binds collagen fibrils. May be involved in collagen fiber organization via regulation of other members of the small leucine-rich repeat proteoglycan superfamily. This chain is Opticin (OPTC), found in Homo sapiens (Human).